Reading from the N-terminus, the 803-residue chain is Myb-like protein V (803 aa).

2 disordered regions span residues 237–333 and 429–803; these read SNIY…LPGL and KSTS…SRRK. Positions 258-323 form a coiled coil; it reads DANDKNENNN…ENNKNKRTKS (66 aa). A compositionally biased stretch (acidic residues) spans 271 to 294; the sequence is DDADDAAADDADDADDDDMDDESD. Residues 295-315 show a composition bias toward low complexity; it reads SNNNNKNSNNKNSNNKNSNEN. The region spanning 332-379 is the Myb-like domain; the sequence is GLWTDEECRSLIKAVMIIGHRWIKIKEDYYSTSKRKPSQLKDKMRSLR. Coiled coils occupy residues 400-429 and 463-496; these read EIEK…SNIK and NNED…NSAV. The span at 429–438 shows a compositional bias: polar residues; sequence KSTSNTSAAS. 2 stretches are compositionally biased toward acidic residues: residues 448–480 and 510–533; these read NDSD…DEND and EEEE…EENE. 2 stretches are compositionally biased toward basic residues: residues 537–553 and 568–577; these read KQKR…KKLK and HKSKLKSKPQ. A coiled-coil region spans residues 573 to 616; that stretch reads KSKPQRKVEKEESEKEESEEEESEEEEEEDDEDYESEEDKKKKK. Acidic residues predominate over residues 586 to 609; it reads EKEESEEEESEEEEEEDDEDYESE. Low complexity-rich tracts occupy residues 625-636 and 666-733; these read TSTHTTTTTTTT and KKSN…PTKK. Basic and acidic residues predominate over residues 786–795; that stretch reads LNKDSKENKK.

This chain is Myb-like protein V (mybV), found in Dictyostelium discoideum (Social amoeba).